The sequence spans 127 residues: MFLTMMKGKIHRATVTEANLNYVGSITIDEELLDASGILPNEKVQVVNINNGARLETYTIPGPRGSGIISLNGAAARLCQIGDKVIIIAYALMEEKEAKQWQPKVVFVDEYNKIVKIKEKEIHGQTE.

The active-site Schiff-base intermediate with substrate; via pyruvic acid is serine 25. At serine 25 the chain carries Pyruvic acid (Ser). Threonine 57 is a binding site for substrate. The active-site Proton donor is the tyrosine 58. 73 to 75 (GAA) is a substrate binding site.

It belongs to the PanD family. Heterooctamer of four alpha and four beta subunits. Pyruvate serves as cofactor. Is synthesized initially as an inactive proenzyme, which is activated by self-cleavage at a specific serine bond to produce a beta-subunit with a hydroxyl group at its C-terminus and an alpha-subunit with a pyruvoyl group at its N-terminus.

The protein localises to the cytoplasm. The catalysed reaction is L-aspartate + H(+) = beta-alanine + CO2. Its pathway is cofactor biosynthesis; (R)-pantothenate biosynthesis; beta-alanine from L-aspartate: step 1/1. Catalyzes the pyruvoyl-dependent decarboxylation of aspartate to produce beta-alanine. This Carboxydothermus hydrogenoformans (strain ATCC BAA-161 / DSM 6008 / Z-2901) protein is Aspartate 1-decarboxylase.